The primary structure comprises 109 residues: MMLRKPKKVIELFIASSLSKKKQTEPQAEQDHYFWLSSSHLFIFESSTIKKKQNTLRTLCNQPHKMQNLFFKQKIQLYIDTSLSFLLLLFFYFNNYYFLSMTYASLVNK.

A helical membrane pass occupies residues 82–102; that stretch reads SLSFLLLLFFYFNNYYFLSMT.

The protein localises to the membrane. This is an uncharacterized protein from Saccharomyces cerevisiae (strain ATCC 204508 / S288c) (Baker's yeast).